Reading from the N-terminus, the 160-residue chain is SsrA-binding protein (160 aa).

The tract at residues 131–160 is disordered; sequence KKEYDKRDTERERDAGRELQRAVRNKGKED.

It belongs to the SmpB family.

The protein localises to the cytoplasm. Its function is as follows. Required for rescue of stalled ribosomes mediated by trans-translation. Binds to transfer-messenger RNA (tmRNA), required for stable association of tmRNA with ribosomes. tmRNA and SmpB together mimic tRNA shape, replacing the anticodon stem-loop with SmpB. tmRNA is encoded by the ssrA gene; the 2 termini fold to resemble tRNA(Ala) and it encodes a 'tag peptide', a short internal open reading frame. During trans-translation Ala-aminoacylated tmRNA acts like a tRNA, entering the A-site of stalled ribosomes, displacing the stalled mRNA. The ribosome then switches to translate the ORF on the tmRNA; the nascent peptide is terminated with the 'tag peptide' encoded by the tmRNA and targeted for degradation. The ribosome is freed to recommence translation, which seems to be the essential function of trans-translation. In Pseudomonas fluorescens (strain Pf0-1), this protein is SsrA-binding protein.